Reading from the N-terminus, the 180-residue chain is Insulin-like growth factor 2 (180 aa).

Residues 1–24 (MGIPMGKSMLVLLTFLAFASCCIA) form the signal peptide. Positions 25–52 (AYRPSETLCGGELVDTLQFVCGDRGFYF) are b. Intrachain disulfides connect C33/C71, C45/C84, and C70/C75. A c region spans residues 53-64 (SRPASRVSRRSR). Residues 65–85 (GIVEECCFRSCDLALLETYCA) are a. Residues 86 to 91 (TPAKSE) form a d region. A propeptide spans 92-180 (RDVSTPPTVL…APPEMASNRK (89 aa)) (e peptide). T96, T99, and T163 each carry an O-linked (GalNAc...) threonine glycan. A disordered region spans residues 161 to 180 (LPTQDPAHGGAPPEMASNRK).

This sequence belongs to the insulin family. In terms of assembly, interacts with MYORG; this interaction is required for IGF2 secretion. Interacts with integrins ITGAV:ITGB3 and ITGA6:ITGB4; integrin-binding is required for IGF2 signaling. Interacts with IGFBP2. In terms of processing, O-glycosylated with core 1 or possibly core 8 glycans. Thr-96 is a minor glycosylation site compared to Thr-99. Proteolytically processed by PCSK4, proIGF2 is cleaved at Arg-128 and Arg-92 to generate big-IGF2 and mature IGF2. Expressed in heart, placenta, lung, liver, muscle, kidney, tongue, limb, eye and pancreas.

The protein resides in the secreted. Its function is as follows. The insulin-like growth factors possess growth-promoting activity. Major fetal growth hormone in mammals. Plays a key role in regulating fetoplacental development. IGF2 is influenced by placental lactogen. Also involved in tissue differentiation. In adults, involved in glucose metabolism in adipose tissue, skeletal muscle and liver. Acts as a ligand for integrin which is required for IGF2 signaling. Positively regulates myogenic transcription factor MYOD1 function by facilitating the recruitment of transcriptional coactivators, thereby controlling muscle terminal differentiation. Inhibits myoblast differentiation and modulates metabolism via increasing the mitochondrial respiration rate. Preptin undergoes glucose-mediated co-secretion with insulin, and acts as a physiological amplifier of glucose-mediated insulin secretion. Exhibits osteogenic properties by increasing osteoblast mitogenic activity through phosphoactivation of MAPK1 and MAPK3. This chain is Insulin-like growth factor 2, found in Homo sapiens (Human).